Consider the following 1221-residue polypeptide: DNA-directed RNA polymerase subunit beta (1221 aa).

Positions 1176-1221 are disordered; that stretch reads EKKKLAEEEAEIAAEAEAEGSAEEDAAEADADANEAETADDDKASK. Residues 1183-1215 show a composition bias toward acidic residues; it reads EEAEIAAEAEAEGSAEEDAAEADADANEAETAD.

The protein belongs to the RNA polymerase beta chain family. As to quaternary structure, the RNAP catalytic core consists of 2 alpha, 1 beta, 1 beta' and 1 omega subunit. When a sigma factor is associated with the core the holoenzyme is formed, which can initiate transcription.

The catalysed reaction is RNA(n) + a ribonucleoside 5'-triphosphate = RNA(n+1) + diphosphate. Its function is as follows. DNA-dependent RNA polymerase catalyzes the transcription of DNA into RNA using the four ribonucleoside triphosphates as substrates. This chain is DNA-directed RNA polymerase subunit beta, found in Lactobacillus delbrueckii subsp. bulgaricus (strain ATCC BAA-365 / Lb-18).